A 254-amino-acid chain; its full sequence is HTH-type transcriptional regulator GlvR (254 aa).

An HTH rpiR-type domain is found at 1–77 (MQLEELINQH…VFLKWEDQPE (77 aa)). Residues 37 to 56 (IDALAKACSVSRSSILRLAQ) constitute a DNA-binding region (H-T-H motif). Residues 106 to 248 (MCQLIDAADR…FRAYVDYKEA (143 aa)) enclose the SIS domain.

Functionally, positive regulator of the glv operon expression, which consists of GlvA, GlvR and GlvC. This Bacillus subtilis (strain 168) protein is HTH-type transcriptional regulator GlvR (glvR).